Here is a 454-residue protein sequence, read N- to C-terminus: Bifunctional protein GlmU (454 aa).

The pyrophosphorylase stretch occupies residues 1–225; sequence MNIVILAAGM…LWETLGVNSK (225 aa). UDP-N-acetyl-alpha-D-glucosamine contacts are provided by residues 6–9, lysine 20, glutamine 71, 76–77, 98–100, glycine 135, glutamate 150, asparagine 165, and asparagine 223; these read LAAG, GT, and YGD. A Mg(2+)-binding site is contributed by aspartate 100. Position 223 (asparagine 223) interacts with Mg(2+). The segment at 226–246 is linker; that stretch reads VQLAEVERIHQRNLAQRLLET. The N-acetyltransferase stretch occupies residues 247–454; sequence GVTLADPARI…WQRPVKKAKQ (208 aa). 2 residues coordinate UDP-N-acetyl-alpha-D-glucosamine: arginine 329 and lysine 347. Residue histidine 359 is the Proton acceptor of the active site. UDP-N-acetyl-alpha-D-glucosamine-binding residues include tyrosine 362 and asparagine 373. Acetyl-CoA is bound by residues alanine 376, 382-383, serine 401, alanine 419, and arginine 436; that span reads NY.

This sequence in the N-terminal section; belongs to the N-acetylglucosamine-1-phosphate uridyltransferase family. The protein in the C-terminal section; belongs to the transferase hexapeptide repeat family. In terms of assembly, homotrimer. Mg(2+) serves as cofactor.

The protein localises to the cytoplasm. It carries out the reaction alpha-D-glucosamine 1-phosphate + acetyl-CoA = N-acetyl-alpha-D-glucosamine 1-phosphate + CoA + H(+). The enzyme catalyses N-acetyl-alpha-D-glucosamine 1-phosphate + UTP + H(+) = UDP-N-acetyl-alpha-D-glucosamine + diphosphate. Its pathway is nucleotide-sugar biosynthesis; UDP-N-acetyl-alpha-D-glucosamine biosynthesis; N-acetyl-alpha-D-glucosamine 1-phosphate from alpha-D-glucosamine 6-phosphate (route II): step 2/2. The protein operates within nucleotide-sugar biosynthesis; UDP-N-acetyl-alpha-D-glucosamine biosynthesis; UDP-N-acetyl-alpha-D-glucosamine from N-acetyl-alpha-D-glucosamine 1-phosphate: step 1/1. It functions in the pathway bacterial outer membrane biogenesis; LPS lipid A biosynthesis. In terms of biological role, catalyzes the last two sequential reactions in the de novo biosynthetic pathway for UDP-N-acetylglucosamine (UDP-GlcNAc). The C-terminal domain catalyzes the transfer of acetyl group from acetyl coenzyme A to glucosamine-1-phosphate (GlcN-1-P) to produce N-acetylglucosamine-1-phosphate (GlcNAc-1-P), which is converted into UDP-GlcNAc by the transfer of uridine 5-monophosphate (from uridine 5-triphosphate), a reaction catalyzed by the N-terminal domain. The chain is Bifunctional protein GlmU from Cupriavidus pinatubonensis (strain JMP 134 / LMG 1197) (Cupriavidus necator (strain JMP 134)).